We begin with the raw amino-acid sequence, 114 residues long: Large ribosomal subunit protein uL22c (114 aa).

It belongs to the universal ribosomal protein uL22 family. Part of the 50S ribosomal subunit.

It is found in the plastid. It localises to the chloroplast. Functionally, this protein binds specifically to 23S rRNA. The globular domain of the protein is located near the polypeptide exit tunnel on the outside of the subunit, while an extended beta-hairpin is found that lines the wall of the exit tunnel in the center of the 70S ribosome. The chain is Large ribosomal subunit protein uL22c (rpl22) from Gracilaria tenuistipitata (Red alga).